A 364-amino-acid chain; its full sequence is Methylthioribose-1-phosphate isomerase (364 aa).

Substrate contacts are provided by residues 53–55, Arg-90, and Gln-203; that span reads RGA. The active-site Proton donor is Asp-244. 254–255 contributes to the substrate binding site; it reads NK.

This sequence belongs to the eIF-2B alpha/beta/delta subunits family. MtnA subfamily.

The catalysed reaction is 5-(methylsulfanyl)-alpha-D-ribose 1-phosphate = 5-(methylsulfanyl)-D-ribulose 1-phosphate. It functions in the pathway amino-acid biosynthesis; L-methionine biosynthesis via salvage pathway; L-methionine from S-methyl-5-thio-alpha-D-ribose 1-phosphate: step 1/6. Catalyzes the interconversion of methylthioribose-1-phosphate (MTR-1-P) into methylthioribulose-1-phosphate (MTRu-1-P). This Rhizobium meliloti (strain 1021) (Ensifer meliloti) protein is Methylthioribose-1-phosphate isomerase.